Consider the following 248-residue polypeptide: Ribosomal RNA small subunit methyltransferase G (248 aa).

Residues glycine 85, phenylalanine 90, 108–110, 137–138, and arginine 156 contribute to the S-adenosyl-L-methionine site; these read DSS and AE.

This sequence belongs to the methyltransferase superfamily. RNA methyltransferase RsmG family.

It is found in the cytoplasm. Functionally, specifically methylates the N7 position of a guanine in 16S rRNA. The chain is Ribosomal RNA small subunit methyltransferase G from Prochlorococcus marinus (strain NATL2A).